We begin with the raw amino-acid sequence, 700 residues long: Elongation factor G (700 aa).

Positions 8–290 (ERYRNIGISA…AVVEYLPAPT (283 aa)) constitute a tr-type G domain. GTP-binding positions include 17–24 (AHIDAGKT), 88–92 (DTPGH), and 142–145 (NKMD).

The protein belongs to the TRAFAC class translation factor GTPase superfamily. Classic translation factor GTPase family. EF-G/EF-2 subfamily.

It localises to the cytoplasm. Catalyzes the GTP-dependent ribosomal translocation step during translation elongation. During this step, the ribosome changes from the pre-translocational (PRE) to the post-translocational (POST) state as the newly formed A-site-bound peptidyl-tRNA and P-site-bound deacylated tRNA move to the P and E sites, respectively. Catalyzes the coordinated movement of the two tRNA molecules, the mRNA and conformational changes in the ribosome. The polypeptide is Elongation factor G (Haemophilus influenzae (strain 86-028NP)).